Here is a 261-residue protein sequence, read N- to C-terminus: uncharacterized protein (261 aa).

It is found in the plastid. Its subcellular location is the chloroplast. This is an uncharacterized protein from Mesostigma viride (Green alga).